The primary structure comprises 470 residues: Uronate isomerase (470 aa).

It belongs to the metallo-dependent hydrolases superfamily. Uronate isomerase family.

It catalyses the reaction D-glucuronate = D-fructuronate. The catalysed reaction is aldehydo-D-galacturonate = keto-D-tagaturonate. The protein operates within carbohydrate metabolism; pentose and glucuronate interconversion. This Salmonella newport (strain SL254) protein is Uronate isomerase.